Here is a 162-residue protein sequence, read N- to C-terminus: Xylulose kinase (162 aa).

The segment at 16–39 (GGHSATPRPATGPAGPAAHSGRHQ) is disordered. The segment covering 20 to 33 (ATPRPATGPAGPAA) has biased composition (low complexity).

The protein belongs to the FGGY kinase family.

It catalyses the reaction D-xylulose + ATP = D-xylulose 5-phosphate + ADP + H(+). Its function is as follows. Catalyzes the phosphorylation of D-xylulose to D-xylulose 5-phosphate. The sequence is that of Xylulose kinase from Actinoplanes sp. (strain ATCC 31351 / 3876) (Ampullariella sp.).